The sequence spans 751 residues: Photosystem I P700 chlorophyll a apoprotein A1 (751 aa).

8 helical membrane-spanning segments follow: residues 73–96 (VFSAHFGQLGIIFIWLSGMYFHGA), 159–182 (LYTTAIGGLVMAAAMFFAGWFHYH), 198–222 (LNHHLAGLLGLGSLAWAGHQIHVSL), 294–312 (TVHHHLAIAVLFLVAGHQY), 349–372 (WHAQLAINLALFGSLSIIVSHHMY), 388–414 (LSLFTHHMWIGGFCIVGAGAHAGIFMV), 436–458 (AMISHLNWVCIFLGFHSFGLYIH), and 533–551 (FMVHHIHAFTIHVTVLILL). [4Fe-4S] cluster-binding residues include Cys-575 and Cys-584. A run of 2 helical transmembrane segments spans residues 591 to 612 (HVFLGLFWMYNSISIVIFHFSW) and 665 to 687 (LSAYGLIFLGAHFVWAFSLMFLF). Chlorophyll a' is bound at residue His-676. Chlorophyll a-binding residues include Met-684 and Tyr-692. Residue Trp-693 participates in phylloquinone binding. Residues 725 to 745 (AVGVAHYLLGGIATTWSFFLA) traverse the membrane as a helical segment.

Belongs to the PsaA/PsaB family. As to quaternary structure, the PsaA/B heterodimer binds the P700 chlorophyll special pair and subsequent electron acceptors. PSI consists of a core antenna complex that captures photons, and an electron transfer chain that converts photonic excitation into a charge separation. The eukaryotic PSI reaction center is composed of at least 11 subunits. The cofactor is P700 is a chlorophyll a/chlorophyll a' dimer, A0 is one or more chlorophyll a, A1 is one or both phylloquinones and FX is a shared 4Fe-4S iron-sulfur center..

It localises to the plastid. The protein resides in the chloroplast thylakoid membrane. It catalyses the reaction reduced [plastocyanin] + hnu + oxidized [2Fe-2S]-[ferredoxin] = oxidized [plastocyanin] + reduced [2Fe-2S]-[ferredoxin]. PsaA and PsaB bind P700, the primary electron donor of photosystem I (PSI), as well as the electron acceptors A0, A1 and FX. PSI is a plastocyanin/cytochrome c6-ferredoxin oxidoreductase, converting photonic excitation into a charge separation, which transfers an electron from the donor P700 chlorophyll pair to the spectroscopically characterized acceptors A0, A1, FX, FA and FB in turn. Oxidized P700 is reduced on the lumenal side of the thylakoid membrane by plastocyanin or cytochrome c6. This Chlorella vulgaris (Green alga) protein is Photosystem I P700 chlorophyll a apoprotein A1.